The primary structure comprises 496 residues: Cobyric acid synthase (496 aa).

The GATase cobBQ-type domain occupies 250 to 437 (TLKVIAPALP…LHGLFESPQA (188 aa)). The active-site Nucleophile is the cysteine 331. Histidine 429 is a catalytic residue.

Belongs to the CobB/CobQ family. CobQ subfamily.

It participates in cofactor biosynthesis; adenosylcobalamin biosynthesis. Functionally, catalyzes amidations at positions B, D, E, and G on adenosylcobyrinic A,C-diamide. NH(2) groups are provided by glutamine, and one molecule of ATP is hydrogenolyzed for each amidation. This chain is Cobyric acid synthase, found in Hahella chejuensis (strain KCTC 2396).